Reading from the N-terminus, the 397-residue chain is Iron-sulfur cluster assembly SufBD family protein Rv1462 (397 aa).

At Thr2 the chain carries N-acetylthreonine.

The protein belongs to the iron-sulfur cluster assembly SufBD family.

This chain is Iron-sulfur cluster assembly SufBD family protein Rv1462, found in Mycobacterium tuberculosis (strain ATCC 25618 / H37Rv).